A 1159-amino-acid chain; its full sequence is WASH complex subunit 5 (1159 aa).

The protein belongs to the strumpellin family. As to quaternary structure, component of the WASH complex.

Its subcellular location is the early endosome. Acts at least in part as component of the WASH complex which seems to regulate washc1 nucleation-promoting factor (NPF) activity and is required for its membrane targeting during endosomal sorting. The chain is WASH complex subunit 5 from Danio rerio (Zebrafish).